Here is a 1017-residue protein sequence, read N- to C-terminus: A-type ATP synthase subunit A (1017 aa).

Positions 396 to 529 (FLGYLIADGT…FSYLLAKLGI (134 aa)) constitute a DOD-type homing endonuclease domain.

It belongs to the ATPase alpha/beta chains family. As to quaternary structure, has multiple subunits with at least A(3), B(3), C, D, E, F, H, I and proteolipid K(x). This protein undergoes a protein self splicing that involves a post-translational excision of the VDE intervening region (intein) followed by peptide ligation.

The protein resides in the cell membrane. The catalysed reaction is ATP + H2O + 4 H(+)(in) = ADP + phosphate + 5 H(+)(out). Functionally, component of the A-type ATP synthase that produces ATP from ADP in the presence of a proton gradient across the membrane. The A chain is the catalytic subunit. This chain is A-type ATP synthase subunit A, found in Pyrococcus abyssi (strain GE5 / Orsay).